The primary structure comprises 252 residues: tRNA (guanine-N(1)-)-methyltransferase (252 aa).

Residues Gly113 and 133–138 (IGDYVL) each bind S-adenosyl-L-methionine.

This sequence belongs to the RNA methyltransferase TrmD family. Homodimer.

The protein resides in the cytoplasm. It catalyses the reaction guanosine(37) in tRNA + S-adenosyl-L-methionine = N(1)-methylguanosine(37) in tRNA + S-adenosyl-L-homocysteine + H(+). Its function is as follows. Specifically methylates guanosine-37 in various tRNAs. This is tRNA (guanine-N(1)-)-methyltransferase from Xanthomonas campestris pv. campestris (strain 8004).